Consider the following 138-residue polypeptide: Aspartate 1-decarboxylase (138 aa).

The active-site Schiff-base intermediate with substrate; via pyruvic acid is the Ser-25. Ser-25 is subject to Pyruvic acid (Ser). Thr-57 provides a ligand contact to substrate. The Proton donor role is filled by Tyr-58. 73–75 is a binding site for substrate; it reads GAA. The disordered stretch occupies residues 116-138; it reads ELGGDPAQVPDGSGLKNPRHPEA.

This sequence belongs to the PanD family. As to quaternary structure, heterooctamer of four alpha and four beta subunits. Pyruvate serves as cofactor. Is synthesized initially as an inactive proenzyme, which is activated by self-cleavage at a specific serine bond to produce a beta-subunit with a hydroxyl group at its C-terminus and an alpha-subunit with a pyruvoyl group at its N-terminus.

The protein resides in the cytoplasm. It carries out the reaction L-aspartate + H(+) = beta-alanine + CO2. The protein operates within cofactor biosynthesis; (R)-pantothenate biosynthesis; beta-alanine from L-aspartate: step 1/1. In terms of biological role, catalyzes the pyruvoyl-dependent decarboxylation of aspartate to produce beta-alanine. The sequence is that of Aspartate 1-decarboxylase from Corynebacterium jeikeium (strain K411).